We begin with the raw amino-acid sequence, 121 residues long: Small ribosomal subunit protein uS13 (121 aa).

Positions 91–121 (HRRGLPVRGQNSKNNARTRKGPRRTVANKKK) are disordered. Over residues 106–121 (ARTRKGPRRTVANKKK) the composition is skewed to basic residues.

Belongs to the universal ribosomal protein uS13 family. In terms of assembly, part of the 30S ribosomal subunit. Forms a loose heterodimer with protein S19. Forms two bridges to the 50S subunit in the 70S ribosome.

Functionally, located at the top of the head of the 30S subunit, it contacts several helices of the 16S rRNA. In the 70S ribosome it contacts the 23S rRNA (bridge B1a) and protein L5 of the 50S subunit (bridge B1b), connecting the 2 subunits; these bridges are implicated in subunit movement. Contacts the tRNAs in the A and P-sites. In Bacillus mycoides (strain KBAB4) (Bacillus weihenstephanensis), this protein is Small ribosomal subunit protein uS13.